Consider the following 699-residue polypeptide: Elongation factor G (699 aa).

A tr-type G domain is found at 8–288 (EDYRNFGIMA…AVVDYLPSPL (281 aa)). GTP-binding positions include 17–24 (AHIDAGKT), 86–90 (DTPGH), and 140–143 (NKMD).

This sequence belongs to the TRAFAC class translation factor GTPase superfamily. Classic translation factor GTPase family. EF-G/EF-2 subfamily.

The protein resides in the cytoplasm. Catalyzes the GTP-dependent ribosomal translocation step during translation elongation. During this step, the ribosome changes from the pre-translocational (PRE) to the post-translocational (POST) state as the newly formed A-site-bound peptidyl-tRNA and P-site-bound deacylated tRNA move to the P and E sites, respectively. Catalyzes the coordinated movement of the two tRNA molecules, the mRNA and conformational changes in the ribosome. In Rhizobium rhizogenes (strain K84 / ATCC BAA-868) (Agrobacterium radiobacter), this protein is Elongation factor G.